We begin with the raw amino-acid sequence, 689 residues long: FAST kinase domain-containing protein 2, mitochondrial (689 aa).

S113 and S126 each carry phosphoserine. Residues 617 to 674 form the RAP domain; sequence VAVLCVPKSVYCLNSCHPRGLMAMKIRHLNVMGFHVILIHNWELKKLKMEDAVTFVRK.

The protein belongs to the FAST kinase family. As to quaternary structure, monomer. Found in a complex with GRSF1, DDX28, DHX30 and FASTKD5. Associates with the 16S mitochondrial rRNA (16S mt-rRNA). Forms a regulatory protein-RNA complex, consisting of RCC1L, NGRN, RPUSD3, RPUSD4, TRUB2, FASTKD2 and 16S mt-rRNA. As to expression, ubiquitously expressed. Expression detected in spleen, testis, colon, heart, smooth muscle, kidney, brain, lung, liver, brown and white adipose tissue with highest expression in testis, heart and smooth muscle.

The protein resides in the mitochondrion matrix. It localises to the mitochondrion nucleoid. Its function is as follows. Plays an important role in assembly of the mitochondrial large ribosomal subunit. As a component of a functional protein-RNA module, consisting of RCC1L, NGRN, RPUSD3, RPUSD4, TRUB2, FASTKD2 and 16S mitochondrial ribosomal RNA (16S mt-rRNA), controls 16S mt-rRNA abundance and is required for intra-mitochondrial translation. May play a role in mitochondrial apoptosis. This is FAST kinase domain-containing protein 2, mitochondrial (Fastkd2) from Mus musculus (Mouse).